The following is a 354-amino-acid chain: Peptide chain release factor 1 (354 aa).

N5-methylglutamine is present on Q230.

The protein belongs to the prokaryotic/mitochondrial release factor family. Post-translationally, methylated by PrmC. Methylation increases the termination efficiency of RF1.

The protein localises to the cytoplasm. Peptide chain release factor 1 directs the termination of translation in response to the peptide chain termination codons UAG and UAA. This Rhodospirillum rubrum (strain ATCC 11170 / ATH 1.1.1 / DSM 467 / LMG 4362 / NCIMB 8255 / S1) protein is Peptide chain release factor 1.